The following is a 265-amino-acid chain: Urease accessory protein UreH (265 aa).

It belongs to the UreD family. In terms of assembly, ureH, UreF and UreG form a complex that acts as a GTP-hydrolysis-dependent molecular chaperone, activating the urease apoprotein by helping to assemble the nickel containing metallocenter of UreC. The UreE protein probably delivers the nickel.

It is found in the cytoplasm. In terms of biological role, required for maturation of urease via the functional incorporation of the urease nickel metallocenter. The protein is Urease accessory protein UreH of Helicobacter pylori (strain G27).